Consider the following 301-residue polypeptide: Methionyl-tRNA formyltransferase (301 aa).

109–112 (SLLP) is a (6S)-5,6,7,8-tetrahydrofolate binding site.

It belongs to the Fmt family.

It catalyses the reaction L-methionyl-tRNA(fMet) + (6R)-10-formyltetrahydrofolate = N-formyl-L-methionyl-tRNA(fMet) + (6S)-5,6,7,8-tetrahydrofolate + H(+). Functionally, attaches a formyl group to the free amino group of methionyl-tRNA(fMet). The formyl group appears to play a dual role in the initiator identity of N-formylmethionyl-tRNA by promoting its recognition by IF2 and preventing the misappropriation of this tRNA by the elongation apparatus. The protein is Methionyl-tRNA formyltransferase of Jannaschia sp. (strain CCS1).